The sequence spans 331 residues: Malate dehydrogenase (331 aa).

14 to 20 (GAAGSIG) lines the NAD(+) pocket. 2 residues coordinate substrate: R95 and R101. Residues N108, Q115, and 132-134 (VGN) contribute to the NAD(+) site. Substrate is bound by residues N134 and R165. The active-site Proton acceptor is H190.

Belongs to the LDH/MDH superfamily. MDH type 2 family.

The catalysed reaction is (S)-malate + NAD(+) = oxaloacetate + NADH + H(+). Catalyzes the reversible oxidation of malate to oxaloacetate. The polypeptide is Malate dehydrogenase (Rhodococcus jostii (strain RHA1)).